The chain runs to 443 residues: Omega-6 fatty acid desaturase, chloroplastic (443 aa).

The transit peptide at 1–64 (MASRIADSLF…AKKRIGCIKA (64 aa)) directs the protein to the chloroplast. A Histidine box-1 motif is present at residues 166–170 (HDCAH). The Histidine box-2 signature appears at 202 to 206 (HDRHH). A Histidine box-3 motif is present at residues 362–366 (HIPHH).

Belongs to the fatty acid desaturase type 1 family.

The protein resides in the plastid. Its subcellular location is the chloroplast membrane. The enzyme catalyses a (9Z)-octadecenoyl-containing glycerolipid + 2 reduced [2Fe-2S]-[ferredoxin] + O2 + 2 H(+) = a (9Z,12Z)-octadecadienoyl-containing glycerolipid + 2 oxidized [2Fe-2S]-[ferredoxin] + 2 H2O. The protein operates within lipid metabolism; polyunsaturated fatty acid biosynthesis. Its function is as follows. Chloroplast omega-6 fatty acid desaturase introduces the second double bond in the biosynthesis of 16:3 and 18:3 fatty acids, important constituents of plant membranes. It is thought to use ferredoxin as an electron donor and to act on fatty acids esterified to galactolipids, sulfolipids and phosphatidylglycerol. This is Omega-6 fatty acid desaturase, chloroplastic from Brassica napus (Rape).